Reading from the N-terminus, the 157-residue chain is Spore germination protein GerT (157 aa).

The protein resides in the spore coat. In terms of biological role, involved in spore germination; probably required at the earliest stage of germination. The polypeptide is Spore germination protein GerT (gerT) (Bacillus subtilis (strain 168)).